The chain runs to 52 residues: Alpha-crystallin B chain (52 aa).

The protein belongs to the small heat shock protein (HSP20) family. Homodimer. Aggregates with homologous proteins, including alpha-A-crystallin and the small heat shock protein HSPB1, to form large heteromeric complexes.

May contribute to the transparency and refractive index of the lens. The sequence is that of Alpha-crystallin B chain (CRYAB) from Turdus merula (Common blackbird).